A 436-amino-acid chain; its full sequence is Probable 4-aminobutyrate aminotransferase (436 aa).

An N6-(pyridoxal phosphate)lysine modification is found at lysine 281.

The protein belongs to the class-III pyridoxal-phosphate-dependent aminotransferase family. Requires pyridoxal 5'-phosphate as cofactor.

It catalyses the reaction 4-aminobutanoate + 2-oxoglutarate = succinate semialdehyde + L-glutamate. It carries out the reaction (S)-3-amino-2-methylpropanoate + 2-oxoglutarate = 2-methyl-3-oxopropanoate + L-glutamate. It participates in amino-acid degradation; 4-aminobutanoate degradation. The sequence is that of Probable 4-aminobutyrate aminotransferase (gabT) from Bacillus subtilis (strain 168).